The primary structure comprises 426 residues: D-tagatose-1,6-bisphosphate aldolase subunit KbaZ (426 aa).

Belongs to the GatZ/KbaZ family. KbaZ subfamily. Forms a complex with KbaY.

It participates in carbohydrate metabolism; D-tagatose 6-phosphate degradation; D-glyceraldehyde 3-phosphate and glycerone phosphate from D-tagatose 6-phosphate: step 2/2. Component of the tagatose-1,6-bisphosphate aldolase KbaYZ that is required for full activity and stability of the Y subunit. Could have a chaperone-like function for the proper and stable folding of KbaY. When expressed alone, KbaZ does not show any aldolase activity. The sequence is that of D-tagatose-1,6-bisphosphate aldolase subunit KbaZ from Escherichia coli O8 (strain IAI1).